The sequence spans 252 residues: Zinc import ATP-binding protein ZnuC (252 aa).

In terms of domain architecture, ABC transporter spans 5 to 220 (VTLNKISVTF…PEFIAMFGQR (216 aa)). 37–44 (GPNGAGKS) is an ATP binding site.

It belongs to the ABC transporter superfamily. Zinc importer (TC 3.A.1.15.5) family. In terms of assembly, the complex is composed of two ATP-binding proteins (ZnuC), two transmembrane proteins (ZnuB) and a solute-binding protein (ZnuA).

The protein localises to the cell inner membrane. It carries out the reaction Zn(2+)(out) + ATP(in) + H2O(in) = Zn(2+)(in) + ADP(in) + phosphate(in) + H(+)(in). Part of the ABC transporter complex ZnuABC involved in zinc import. Responsible for energy coupling to the transport system. In Yersinia enterocolitica serotype O:8 / biotype 1B (strain NCTC 13174 / 8081), this protein is Zinc import ATP-binding protein ZnuC.